Consider the following 360-residue polypeptide: UDP-N-acetylglucosamine--N-acetylmuramyl-(pentapeptide) pyrophosphoryl-undecaprenol N-acetylglucosamine transferase (360 aa).

Residues 15–17 (TGG), asparagine 127, arginine 163, serine 191, isoleucine 249, 268–273 (ALTVSE), and glutamine 293 each bind UDP-N-acetyl-alpha-D-glucosamine.

Belongs to the glycosyltransferase 28 family. MurG subfamily.

Its subcellular location is the cell inner membrane. It carries out the reaction di-trans,octa-cis-undecaprenyl diphospho-N-acetyl-alpha-D-muramoyl-L-alanyl-D-glutamyl-meso-2,6-diaminopimeloyl-D-alanyl-D-alanine + UDP-N-acetyl-alpha-D-glucosamine = di-trans,octa-cis-undecaprenyl diphospho-[N-acetyl-alpha-D-glucosaminyl-(1-&gt;4)]-N-acetyl-alpha-D-muramoyl-L-alanyl-D-glutamyl-meso-2,6-diaminopimeloyl-D-alanyl-D-alanine + UDP + H(+). It functions in the pathway cell wall biogenesis; peptidoglycan biosynthesis. In terms of biological role, cell wall formation. Catalyzes the transfer of a GlcNAc subunit on undecaprenyl-pyrophosphoryl-MurNAc-pentapeptide (lipid intermediate I) to form undecaprenyl-pyrophosphoryl-MurNAc-(pentapeptide)GlcNAc (lipid intermediate II). The protein is UDP-N-acetylglucosamine--N-acetylmuramyl-(pentapeptide) pyrophosphoryl-undecaprenol N-acetylglucosamine transferase of Proteus mirabilis (strain HI4320).